Consider the following 217-residue polypeptide: Peptide methionine sulfoxide reductase MsrA (217 aa).

Cys-56 is an active-site residue.

It belongs to the MsrA Met sulfoxide reductase family.

The enzyme catalyses L-methionyl-[protein] + [thioredoxin]-disulfide + H2O = L-methionyl-(S)-S-oxide-[protein] + [thioredoxin]-dithiol. It carries out the reaction [thioredoxin]-disulfide + L-methionine + H2O = L-methionine (S)-S-oxide + [thioredoxin]-dithiol. Functionally, has an important function as a repair enzyme for proteins that have been inactivated by oxidation. Catalyzes the reversible oxidation-reduction of methionine sulfoxide in proteins to methionine. This is Peptide methionine sulfoxide reductase MsrA from Corynebacterium glutamicum (strain R).